Consider the following 269-residue polypeptide: L-cystine-binding protein TcyJ (269 aa).

The signal sequence occupies residues 1 to 20; that stretch reads MNKRKGLVLLLSVFALLGGG. Residue Cys-21 is the site of N-palmitoyl cysteine attachment. Cys-21 carries the S-diacylglycerol cysteine lipid modification.

The protein belongs to the bacterial solute-binding protein 3 family. As to quaternary structure, the complex is composed of two ATP-binding proteins (TcyN), two transmembrane proteins (TcyL and TcyM) and two solute-binding proteins (TcyJ and TcyK).

It localises to the cell membrane. In terms of biological role, part of the ABC transporter complex TcyJKLMN involved in L-cystine import. Is also involved in cystathionine, djenkolate, and S-methylcysteine transport. The protein is L-cystine-binding protein TcyJ (tcyJ) of Bacillus subtilis (strain 168).